Here is a 244-residue protein sequence, read N- to C-terminus: Cysteine-rich secretory protein 2 (244 aa).

A signal peptide spans 1–21 (MALLPVVVFLITMLLPCVLTN). The SCP domain occupies 43–170 (NKHNQLRKSV…SLKYYYVCQY (128 aa)). Intrachain disulfides connect C190–C197, C193–C202, C206–C239, C215–C233, and C224–C237. The ShKT domain maps to 206–239 (CEYEDLLSNCESLKNTAGCEHQLLVEKCKATCRC).

Belongs to the CRISP family. Interacts with NSUN4 isoform 3. In terms of tissue distribution, testis.

The protein localises to the secreted. Its function is as follows. May regulate some ion channels' activity and thereby regulate calcium fluxes during sperm capacitation. In Cavia porcellus (Guinea pig), this protein is Cysteine-rich secretory protein 2 (CRISP2).